The sequence spans 480 residues: UDP-glycosyltransferase 71C5 (480 aa).

UDP-alpha-D-glucose is bound by residues Ser290, 349-351, 366-374, and 388-391; these read APQ, HCGWNSVQE, and YAEQ.

Belongs to the UDP-glycosyltransferase family.

In terms of biological role, possesses low quercetin 3-O-glucosyltransferase activity in vitro. This is UDP-glycosyltransferase 71C5 (UGT71C5) from Arabidopsis thaliana (Mouse-ear cress).